The sequence spans 308 residues: Apolipoprotein E (308 aa).

The first 18 residues, 1–18 (MKFLWAALVVTLLAGCRA), serve as a signal peptide directing secretion. 8 tandem repeats follow at residues 75 to 96 (LLIE…KQVG), 97 to 118 (PIAQ…ARLE), 119 to 140 (SDME…AALG), 141 to 162 (QNTD…KRLL), 163 to 184 (RDAE…EAAE), 185 to 206 (RGVS…LQAI), 207 to 224 (PPSQ…QKVR), and 225 to 246 (GRLE…DQME). An 8 X 22 AA approximate tandem repeats region spans residues 75–246 (LLIEETMKEV…RLDDMRDQME (172 aa)). Residues 153–163 (HLRKLRKRLLR) are LDL and other lipoprotein receptors binding. Heparin is bound at residue 157-160 (LRKR). Positions 205–281 (AIPPSQQLRE…SWFEPLVQDM (77 aa)) are lipid-binding and lipoprotein association. 220 to 227 (GQKVRGRL) contacts heparin. Positions 257-308 (SQVRLQAEAFQTRLKSWFEPLVQDMQRQWASLVEKVQSTLGISPSTKPSKTK) are homooligomerization. The tract at residues 269–281 (RLKSWFEPLVQDM) is specificity for association with VLDL.

This sequence belongs to the apolipoprotein A1/A4/E family. As to quaternary structure, homotetramer. May interact with ABCA1; functionally associated with ABCA1 in the biogenesis of HDLs. May interact with APP/A4 amyloid-beta peptide; the interaction is extremely stable in vitro but its physiological significance is unclear. May interact with MAPT. May interact with MAP2. In the cerebrospinal fluid, interacts with secreted SORL1. Interacts with PMEL; this allows the loading of PMEL luminal fragment on ILVs to induce fibril nucleation. In terms of processing, APOE exists as multiple glycosylated and sialylated glycoforms within cells and in plasma. The extent of glycosylation and sialylation are tissue and context specific. Post-translationally, glycated in plasma VLDL. Phosphorylated by FAM20C in the extracellular medium.

Its subcellular location is the secreted. The protein resides in the extracellular space. It localises to the extracellular matrix. It is found in the extracellular vesicle. The protein localises to the endosome. Its subcellular location is the multivesicular body. In terms of biological role, APOE is an apolipoprotein, a protein associating with lipid particles, that mainly functions in lipoprotein-mediated lipid transport between organs via the plasma and interstitial fluids. APOE is a core component of plasma lipoproteins and is involved in their production, conversion and clearance. Apolipoproteins are amphipathic molecules that interact both with lipids of the lipoprotein particle core and the aqueous environment of the plasma. As such, APOE associates with chylomicrons, chylomicron remnants, very low density lipoproteins (VLDL) and intermediate density lipoproteins (IDL) but shows a preferential binding to high-density lipoproteins (HDL). It also binds a wide range of cellular receptors including the LDL receptor/LDLR and the very low-density lipoprotein receptor/VLDLR that mediate the cellular uptake of the APOE-containing lipoprotein particles. Finally, APOE also has a heparin-binding activity and binds heparan-sulfate proteoglycans on the surface of cells, a property that supports the capture and the receptor-mediated uptake of APOE-containing lipoproteins by cells. The chain is Apolipoprotein E (APOE) from Pteropus pselaphon (Bonin flying fox).